The following is a 72-amino-acid chain: Translation initiation factor IF-1 (72 aa).

An S1-like domain is found at 1 to 72; sequence MAKDDVIEVD…DKGRITFRYK (72 aa).

This sequence belongs to the IF-1 family. As to quaternary structure, component of the 30S ribosomal translation pre-initiation complex which assembles on the 30S ribosome in the order IF-2 and IF-3, IF-1 and N-formylmethionyl-tRNA(fMet); mRNA recruitment can occur at any time during PIC assembly.

It is found in the cytoplasm. Functionally, one of the essential components for the initiation of protein synthesis. Stabilizes the binding of IF-2 and IF-3 on the 30S subunit to which N-formylmethionyl-tRNA(fMet) subsequently binds. Helps modulate mRNA selection, yielding the 30S pre-initiation complex (PIC). Upon addition of the 50S ribosomal subunit IF-1, IF-2 and IF-3 are released leaving the mature 70S translation initiation complex. This is Translation initiation factor IF-1 from Wolinella succinogenes (strain ATCC 29543 / DSM 1740 / CCUG 13145 / JCM 31913 / LMG 7466 / NCTC 11488 / FDC 602W) (Vibrio succinogenes).